The chain runs to 427 residues: Enolase (427 aa).

Q163 contacts (2R)-2-phosphoglycerate. Residue E205 is the Proton donor of the active site. Mg(2+) contacts are provided by D242, E285, and D312. (2R)-2-phosphoglycerate is bound by residues K337, R366, S367, and K388. K337 acts as the Proton acceptor in catalysis.

Belongs to the enolase family. Requires Mg(2+) as cofactor.

It is found in the cytoplasm. The protein localises to the secreted. The protein resides in the cell surface. It catalyses the reaction (2R)-2-phosphoglycerate = phosphoenolpyruvate + H2O. Its pathway is carbohydrate degradation; glycolysis; pyruvate from D-glyceraldehyde 3-phosphate: step 4/5. Catalyzes the reversible conversion of 2-phosphoglycerate (2-PG) into phosphoenolpyruvate (PEP). It is essential for the degradation of carbohydrates via glycolysis. The chain is Enolase from Albidiferax ferrireducens (strain ATCC BAA-621 / DSM 15236 / T118) (Rhodoferax ferrireducens).